We begin with the raw amino-acid sequence, 716 residues long: Beta-1,2-glucosyltransferase (716 aa).

The sophorose site is built by tyrosine 52, isoleucine 99, alanine 101, glutamate 102, asparagine 175, glutamate 176, glycine 278, tryptophan 279, glutamate 343, and arginine 349. The Proton donor/acceptor role is filled by glutamate 176. 3 residues coordinate beta-D-glucose: glutamate 176, glycine 278, and tryptophan 279. The active-site Nucleophile is glutamate 343. Residues arginine 349, lysine 358, and glutamate 361 each coordinate beta-D-glucose. Sophorose is bound at residue tyrosine 378. Residues serine 708 and tyrosine 709 each coordinate beta-D-glucose.

Belongs to the glycosyl hydrolase 35 family. Homidimer.

It is found in the cytoplasm. The enzyme catalyses a D-glucoside + [(1-&gt;2)-beta-D-glucosyl](n) = a beta-D-glucosyl-(1-&gt;2)-D-glucoside + [(1-&gt;2)-beta-D-glucosyl](n-1). In terms of biological role, glycosyltransferase acting on beta-1,2-glucooligosaccharides. Catalyzes the transfer of a glucosyl residue from the non-reducing end of a 1,2-beta-D-glucan to a glucose residue of an acceptor molecule, forming a beta-1,2-glucosidic bond. The beta-1,2-linked glucose dimer sophorose is the preferred donor in vitro. Has a very broad specificity for the acceptor and can act on various aryl- and alkyl-glucosides. Does not show any hydrolytic activity. The protein is Beta-1,2-glucosyltransferase of Ignavibacterium album (strain DSM 19864 / JCM 16511 / NBRC 101810 / Mat9-16).